We begin with the raw amino-acid sequence, 241 residues long: Endo-chitosanase B (241 aa).

Residues 1–17 (MRLSEILAVALVTGATA) form the signal peptide. N86 carries N-linked (GlcNAc...) asparagine glycosylation.

This sequence belongs to the glycosyl hydrolase 75 family.

Its subcellular location is the secreted. It catalyses the reaction Endohydrolysis of beta-(1-&gt;4)-linkages between D-glucosamine residues in a partly acetylated chitosan.. Functionally, chitosanase catalyzing the endo-type cleavage of chitosan, the deacylated form of chitin. Chitosanase may be crucial in the degradation of the deacetylated portion of chitin in the fungal cell wall. Chitoolisaccharides produced by the hydrolysis of partially N-acetylated chitosan are known to have many biological activities, including antibacterial activity, immune-enhancing effects, and elicitor activity. This Aspergillus oryzae (strain ATCC 42149 / RIB 40) (Yellow koji mold) protein is Endo-chitosanase B (csnB).